Reading from the N-terminus, the 332-residue chain is Hdr-like menaquinol oxidoreductase cytochrome b-like subunit (332 aa).

5 helical membrane-spanning segments follow: residues 3–23 (GVIF…IGVI), 97–117 (DARW…LVLI), 143–163 (VFIP…FLLW), 177–197 (LPSD…GNVM), and 230–250 (IEPI…YFPF).

In terms of assembly, consists of five subunits: an integral membrane subunit, a cytochrome b-like subunit, a cytochrome c subunit and two iron-sulfur subunits.

The protein resides in the cell membrane. Functionally, has menaquinol-oxidizing activity. HmeC and HmeD subunits may together mediate electron transfer from menaquinol to an unidentified electron acceptor on the cytoplasmic side of the membrane. This is Hdr-like menaquinol oxidoreductase cytochrome b-like subunit (hmeC) from Archaeoglobus fulgidus (strain ATCC 49558 / DSM 4304 / JCM 9628 / NBRC 100126 / VC-16).